Reading from the N-terminus, the 66-residue chain is U1-theraphotoxin-Cg1d 1 (66 aa).

The signal sequence occupies residues 1-21 (MKMSALFVIFGLALLFCNSFA). The propeptide occupies 22 to 29 (AELKATGR). Intrachain disulfides connect cysteine 31/cysteine 46, cysteine 38/cysteine 51, and cysteine 45/cysteine 58. At proline 63 the chain carries Proline amide.

The protein belongs to the neurotoxin 10 (Hwtx-1) family. 46 (Jztx-7/10/12) subfamily. In terms of tissue distribution, expressed by the venom gland.

Its subcellular location is the secreted. Probable ion channel inhibitor. The protein is U1-theraphotoxin-Cg1d 1 of Chilobrachys guangxiensis (Chinese earth tiger tarantula).